The primary structure comprises 845 residues: Protein SPA1-RELATED 3 (845 aa).

Residues 1-19 show a composition bias toward polar residues; the sequence is MEGSSNSNSRGFNTSGVSD. Disordered regions lie at residues 1-33 and 139-158; these read MEGS…LTTR and CSDS…KEIG. A Protein kinase domain is found at 1-297; the sequence is MEGSSNSNSR…MSDLLQSEFI (297 aa). The stretch at 301–329 forms a coiled coil; the sequence is RDNLEEREAAIELRDRIEEQESLLEFLLL. 7 WD repeats span residues 532–571, 581–621, 624–664, 666–706, 710–748, 757–796, and 812–845; these read NSSN…NDNR, AGRS…LVTE, EHKK…SIGT, KTKA…IPLC, GHSK…SGIN, GHTN…PVMS, and DASQ…EMMT. Positions 685 to 699 match the DWD box motif; it reads AFGSADHKVYYYDLR.

In terms of assembly, interacts with COP1 and CO.

It localises to the nucleus. Repressor of photomorphogenesis in the light. Probably part of the COP1/SPA E3 ubiquitin-protein ligase complex. The sequence is that of Protein SPA1-RELATED 3 (SPA3) from Arabidopsis thaliana (Mouse-ear cress).